Reading from the N-terminus, the 342-residue chain is Nucleoid-associated protein Shewana3_2426 (342 aa).

Belongs to the YejK family.

The protein resides in the cytoplasm. The protein localises to the nucleoid. The protein is Nucleoid-associated protein Shewana3_2426 of Shewanella sp. (strain ANA-3).